We begin with the raw amino-acid sequence, 400 residues long: Deoxyguanosinetriphosphate triphosphohydrolase-like protein (400 aa).

The region spanning 73-215 is the HD domain; the sequence is RLTHSIEVSQ…AAIADDIAYN (143 aa).

This sequence belongs to the dGTPase family. Type 2 subfamily.

The protein is Deoxyguanosinetriphosphate triphosphohydrolase-like protein of Bartonella tribocorum (strain CIP 105476 / IBS 506).